We begin with the raw amino-acid sequence, 159 residues long: Putative ribosomal RNA large subunit methyltransferase H (159 aa).

S-adenosyl-L-methionine-binding positions include Leu76, Gly108, and 127–132 (FSKMTF).

The protein belongs to the RNA methyltransferase RlmH family.

It localises to the cytoplasm. It carries out the reaction pseudouridine(1915) in 23S rRNA + S-adenosyl-L-methionine = N(3)-methylpseudouridine(1915) in 23S rRNA + S-adenosyl-L-homocysteine + H(+). Specifically methylates the pseudouridine at position 1915 (m3Psi1915) in 23S rRNA. This Methanococcus maripaludis (strain C5 / ATCC BAA-1333) protein is Putative ribosomal RNA large subunit methyltransferase H.